The following is a 120-amino-acid chain: Large ribosomal subunit protein eL18 (120 aa).

It belongs to the eukaryotic ribosomal protein eL18 family.

In Thermoplasma acidophilum (strain ATCC 25905 / DSM 1728 / JCM 9062 / NBRC 15155 / AMRC-C165), this protein is Large ribosomal subunit protein eL18.